A 288-amino-acid chain; its full sequence is MKQYLELVNEILKDGEKREDRTNTGTISKFGVQKRYDLREGFPLLTTKKVFYKAIFHEMLWFIKGDTNIKYLVENNVKIWNEWPYENFKKSSEFNNETLQEFVERLKNDNEFCNKWGDLGPVYGKQWRDFGGIDQFAKLINDIKKNPFSRRHIVSAWNPAEVDNMLLPPCHSFWQVYVSKDGWLDLQLYQRSGDVFLGVPFNIASYALLMELIAKECNLKARYFVHTIGDAHIYLNHLEQINEQLKRKPLPLCKIKINSEKSIFDIAFEDIEIEGYESHAKITGEVAV.

DUMP contacts are provided by residues Arg-21 and 150-151 (RR). Catalysis depends on Cys-170, which acts as the Nucleophile. Residues 191-194 (RSGD), Asn-202, and 232-234 (HIY) each bind dUMP. Residue Asp-194 coordinates (6R)-5,10-methylene-5,6,7,8-tetrahydrofolate. Ala-287 contributes to the (6R)-5,10-methylene-5,6,7,8-tetrahydrofolate binding site.

The protein belongs to the thymidylate synthase family. Bacterial-type ThyA subfamily. Homodimer.

The protein resides in the cytoplasm. It carries out the reaction dUMP + (6R)-5,10-methylene-5,6,7,8-tetrahydrofolate = 7,8-dihydrofolate + dTMP. Its pathway is pyrimidine metabolism; dTTP biosynthesis. Its function is as follows. Catalyzes the reductive methylation of 2'-deoxyuridine-5'-monophosphate (dUMP) to 2'-deoxythymidine-5'-monophosphate (dTMP) while utilizing 5,10-methylenetetrahydrofolate (mTHF) as the methyl donor and reductant in the reaction, yielding dihydrofolate (DHF) as a by-product. This enzymatic reaction provides an intracellular de novo source of dTMP, an essential precursor for DNA biosynthesis. The protein is Thymidylate synthase of Mesoplasma florum (strain ATCC 33453 / NBRC 100688 / NCTC 11704 / L1) (Acholeplasma florum).